The sequence spans 470 residues: Sperm-associated antigen 8 (470 aa).

The span at 1 to 21 (METTESTEGSLSRSCDVQPSS) shows a compositional bias: polar residues. Disordered stretches follow at residues 1–70 (METT…PPAH), 117–178 (SGTC…GQGP), and 302–321 (LTTQPQSPMSSSTTQRDSYQ). Positions 27–48 (PSEPVPSSSSSPRSTAPAEAPA) are enriched in low complexity. Residues 51 to 60 (SVLTEPSSDS) show a composition bias toward polar residues. 2 stretches are compositionally biased toward low complexity: residues 122–175 (LGQS…ADPG) and 303–316 (TTQPQSPMSSSTTQ). Mn regions lie at residues 312 to 325 (SSTTQRDSYQLPRH) and 364 to 378 (ESVTHHDYRVELVRA).

The protein belongs to the SPAG8 family. In terms of assembly, microtubule inner protein component of sperm flagellar doublet microtubules. Interacts with FHL5 (via second LIM domain). Interacts with RANBP9. As to expression, expressed in testis (at protein level). Not detected in brain, heart, kidney, spleen, liver, lung, thymus and colon (at protein level).

It is found in the cytoplasm. Its subcellular location is the nucleus. The protein resides in the cytoplasmic vesicle. It localises to the secretory vesicle. The protein localises to the acrosome. It is found in the cytoskeleton. Its subcellular location is the microtubule organizing center. The protein resides in the spindle. It localises to the cilium axoneme. The protein localises to the flagellum axoneme. Microtubule inner protein (MIP) part of the dynein-decorated doublet microtubules (DMTs) in cilia axoneme, which is required for motile cilia beating. Plays a role in spermatogenesis by enhancing the binding of CREM isoform tau to its coactivator FHL5 and increasing the FHL5-regulated transcriptional activation of CREM isoform tau. Involved in the acrosome reaction and in binding of sperm to the zona pellucida. Plays a role in regulation of the cell cycle by controlling progression through the G2/M phase, possibly by delaying the activation of CDK1 which is required for entry into mitosis. May play a role in fertility and microtubule formation through interaction with RANBP9. The protein is Sperm-associated antigen 8 of Mus musculus (Mouse).